Consider the following 955-residue polypeptide: 2-oxoglutarate dehydrogenase E1 component (955 aa).

This sequence belongs to the alpha-ketoglutarate dehydrogenase family. As to quaternary structure, homodimer. Part of the 2-oxoglutarate dehydrogenase (OGDH) complex composed of E1 (2-oxoglutarate dehydrogenase), E2 (dihydrolipoamide succinyltransferase) and E3 (dihydrolipoamide dehydrogenase); the complex contains multiple copies of the three enzymatic components (E1, E2 and E3). Thiamine diphosphate is required as a cofactor.

The enzyme catalyses N(6)-[(R)-lipoyl]-L-lysyl-[protein] + 2-oxoglutarate + H(+) = N(6)-[(R)-S(8)-succinyldihydrolipoyl]-L-lysyl-[protein] + CO2. Its function is as follows. E1 component of the 2-oxoglutarate dehydrogenase (OGDH) complex which catalyzes the decarboxylation of 2-oxoglutarate, the first step in the conversion of 2-oxoglutarate to succinyl-CoA and CO(2). This chain is 2-oxoglutarate dehydrogenase E1 component, found in Bacillus cereus (strain ZK / E33L).